The chain runs to 738 residues: MAKIIWTRTDEAPLLATYSLKPVVEAFAATAGIEVETRDISLAGRILAQFPERLTEDQKVGNALAELGELAKTPEANIIKLPNISASVPQLKAAIKELQDQGYDIPELPDNATTDEEKDILARYNAVKGSAVNPVLREGNSDRRAPIAVKNFVKKFPHRMGEWSADSKTNVATMDANDFRHNEKSIILDAADEVQIKHIAADGTETILKDSLKLLEGEVLDGTVLSAKALDAFLLEQVARAKAEGILFSAHLKATMMKVSDPIIFGHVVRAYFADVFAQYGEQLLAAGLNGENGLAAILSGLESLDNGEEIKAAFEKGLEDGPDLAMVNSARGITNLHVPSDVIVDASMPAMIRTSGHMWNKDDQEQDTLAIIPDSSYAGVYQTVIEDCRKNGAFDPTTMGTVPNVGLMAQKAEEYGSHDKTFRIEADGVVQVVSSNGDVLIEHDVEANDIWRACQVKDAPIQDWVKLAVTRSRLSGMPAVFWLDPERAHDRNLASLVEKYLADHDTEGLDIQILSPVEATQLSIDRIRRGEDTISVTGNVLRDYNTDLFPILELGTSAKMLSVVPLMAGGGLFETGAGGSAPKHVQQVQEENHLRWDSLGEFLALAESFRHELNNNGNTKAGVLADALDKATEKLLNEEKSPSRKVGEIDNRGSHFWLTKFWADELAAQTEDADLAATFAPVAEALNTGAADIDAALLAVQGGATDLGGYYSPNEEKLTNIMRPVAQFNEIVDALKK.

Residues Asn-83 and Ser-85 each contribute to the NADP(+) site. Ser-130, Asn-133, Arg-137, Arg-143, and Lys-253 together coordinate D-threo-isocitrate. Asn-133 serves as a coordination point for NADP(+). Asp-346 contacts Mg(2+). D-threo-isocitrate is bound by residues Tyr-416 and Arg-543. 2 residues coordinate Mg(2+): Asp-544 and Asp-548. NADP(+)-binding residues include Gly-580, His-585, Arg-596, Asp-598, and Arg-645.

Belongs to the monomeric-type IDH family. Monomer. The cofactor is Mg(2+). Requires Mn(2+) as cofactor.

The protein localises to the cytoplasm. It carries out the reaction D-threo-isocitrate + NADP(+) = 2-oxoglutarate + CO2 + NADPH. With respect to regulation, weakly inhibited by oxaloacetate, 2-oxoglutarate and citrate. Severely inhibited by oxaloacetate plus glyoxylate. In terms of biological role, catalyzes the oxidative decarboxylation of isocitrate to 2-oxoglutarate and carbon dioxide with the concomitant reduction of NADP(+). Cannot use NAD(+). The chain is Isocitrate dehydrogenase [NADP] from Corynebacterium glutamicum (strain ATCC 13032 / DSM 20300 / JCM 1318 / BCRC 11384 / CCUG 27702 / LMG 3730 / NBRC 12168 / NCIMB 10025 / NRRL B-2784 / 534).